We begin with the raw amino-acid sequence, 121 residues long: MARFAGVDIPNEKRIVISLTYVFGVGLQTSKKVLAAAGVSEDIRTKDLTSDQEDAIRRELDGLKLEGDLRREVSLNIKRLMEIGSYRGMRHRRGLPTRGQNTKNNARTRKGPAKSIAGKKK.

The interval 88–121 is disordered; sequence GMRHRRGLPTRGQNTKNNARTRKGPAKSIAGKKK. Residues 106 to 121 are compositionally biased toward basic residues; the sequence is ARTRKGPAKSIAGKKK.

This sequence belongs to the universal ribosomal protein uS13 family. Part of the 30S ribosomal subunit. Forms a loose heterodimer with protein S19. Forms two bridges to the 50S subunit in the 70S ribosome.

Functionally, located at the top of the head of the 30S subunit, it contacts several helices of the 16S rRNA. In the 70S ribosome it contacts the 23S rRNA (bridge B1a) and protein L5 of the 50S subunit (bridge B1b), connecting the 2 subunits; these bridges are implicated in subunit movement. Contacts the tRNAs in the A and P-sites. This is Small ribosomal subunit protein uS13 from Lactococcus lactis subsp. cremoris (strain MG1363).